Consider the following 456-residue polypeptide: UDP-N-acetylmuramate--L-alanine ligase (456 aa).

Gly-118–Thr-124 is an ATP binding site.

The protein belongs to the MurCDEF family.

The protein localises to the cytoplasm. The catalysed reaction is UDP-N-acetyl-alpha-D-muramate + L-alanine + ATP = UDP-N-acetyl-alpha-D-muramoyl-L-alanine + ADP + phosphate + H(+). It participates in cell wall biogenesis; peptidoglycan biosynthesis. In terms of biological role, cell wall formation. In Paenarthrobacter aurescens (strain TC1), this protein is UDP-N-acetylmuramate--L-alanine ligase.